The chain runs to 423 residues: RRVPLLLLGILFLASLSASFAISLREHNESQDNPFYFSSDNSWQTLFKNQYGHIRVLQRFDQRSERLQNLEDYRLVEFMSKPETLLLPQQADAEFLLVVRSGSALLALVKPGGTIIYSLKQQDTLKIPAGTIFFLINPENNEDLRIIKLAMTVNNPQIQDFFLSSTEAQQSYLYGFSKHILDASFNSPIEKINRLLFAEEGRQEGVIVNIGSDLIQELSRHAKSSSRKSLDHNSLDISNEWGNLTDIVYNSLDVLLTYVEIKEGGLFVPHYNSKAIVILVVEEGVAKVELVGPKREKESLELETYRADVSEGDVFVIPAAFPFAIKAISNVNFTSFGINANNNYRIFLTGKGGPTGKEDNIISAGINPDVLGLMFPGSGEDVQKLFNNQNLSHFVNGSYHKNAHPHEQEQQKQQKGRKGAFVY.

The first 21 residues, 1–21, serve as a signal peptide directing secretion; that stretch reads RRVPLLLLGILFLASLSASFA. N-linked (GlcNAc...) asparagine glycosylation is present at asparagine 28. 2 Cupin type-1 domains span residues 35–193 and 228–383; these read FYFS…EKIN and KSLD…EDVQ. 4 N-linked (GlcNAc...) asparagine glycosylation sites follow: asparagine 243, asparagine 332, asparagine 390, and asparagine 396. The segment at 397–423 is disordered; that stretch reads GSYHKNAHPHEQEQQKQQKGRKGAFVY. A compositionally biased stretch (basic residues) spans 414-423; it reads QKGRKGAFVY.

Belongs to the 7S seed storage protein family. As to quaternary structure, homotrimer.

It is found in the vacuole. The protein resides in the aleurone grain. In terms of biological role, major seed storage protein. The sequence is that of Phaseolin (PHS) from Phaseolus lunatus (Lima bean).